We begin with the raw amino-acid sequence, 474 residues long: Glutamate--tRNA ligase 2 (474 aa).

The 'HIGH' region motif lies at Pro-16–Gly-26. The short motif at Lys-245 to Arg-249 is the 'KMSKS' region element. Lys-248 lines the ATP pocket.

The protein belongs to the class-I aminoacyl-tRNA synthetase family. Glutamate--tRNA ligase type 1 subfamily. As to quaternary structure, monomer.

Its subcellular location is the cytoplasm. The catalysed reaction is tRNA(Glu) + L-glutamate + ATP = L-glutamyl-tRNA(Glu) + AMP + diphosphate. Its function is as follows. Catalyzes the attachment of glutamate to tRNA(Glu) in a two-step reaction: glutamate is first activated by ATP to form Glu-AMP and then transferred to the acceptor end of tRNA(Glu). The protein is Glutamate--tRNA ligase 2 of Rhizorhabdus wittichii (strain DSM 6014 / CCUG 31198 / JCM 15750 / NBRC 105917 / EY 4224 / RW1) (Sphingomonas wittichii).